The chain runs to 152 residues: UPF0266 membrane protein plu2700 (152 aa).

A run of 3 helical transmembrane segments spans residues isoleucine 6–valine 26, isoleucine 45–tyrosine 65, and serine 67–isoleucine 87.

Belongs to the UPF0266 family.

The protein localises to the cell inner membrane. This Photorhabdus laumondii subsp. laumondii (strain DSM 15139 / CIP 105565 / TT01) (Photorhabdus luminescens subsp. laumondii) protein is UPF0266 membrane protein plu2700.